We begin with the raw amino-acid sequence, 782 residues long: E3 ubiquitin-protein ligase SopA (782 aa).

Cys753 (glycyl thioester intermediate) is an active-site residue.

It belongs to the SopA E3 ligase family. In terms of processing, ubiquitinated in the presence of host E1 ubiquitin-activating enzyme, E2 ubiquitin-conjugating enzyme and ubiquitin.

The protein resides in the secreted. It localises to the host cell. The enzyme catalyses S-ubiquitinyl-[E2 ubiquitin-conjugating enzyme]-L-cysteine + [acceptor protein]-L-lysine = [E2 ubiquitin-conjugating enzyme]-L-cysteine + N(6)-ubiquitinyl-[acceptor protein]-L-lysine.. Its function is as follows. Effector proteins function to alter host cell physiology and promote bacterial survival in host tissues. This protein is an E3 ubiquitin ligase that interferes with host's ubiquitination pathway. In Salmonella choleraesuis (strain SC-B67), this protein is E3 ubiquitin-protein ligase SopA (sopA).